The sequence spans 152 residues: Xanthine-guanine phosphoribosyltransferase (152 aa).

Residues Arg-37–Gly-38 and Asp-88–Thr-96 contribute to the 5-phospho-alpha-D-ribose 1-diphosphate site. Residue Asp-89 coordinates Mg(2+). 2 residues coordinate guanine: Asp-92 and Ile-135. 2 residues coordinate xanthine: Asp-92 and Ile-135. Residues Asp-92–Thr-96 and Trp-134–Ile-135 contribute to the GMP site.

This sequence belongs to the purine/pyrimidine phosphoribosyltransferase family. XGPT subfamily. As to quaternary structure, homotetramer. Mg(2+) is required as a cofactor.

It localises to the cell inner membrane. It catalyses the reaction GMP + diphosphate = guanine + 5-phospho-alpha-D-ribose 1-diphosphate. The enzyme catalyses XMP + diphosphate = xanthine + 5-phospho-alpha-D-ribose 1-diphosphate. It carries out the reaction IMP + diphosphate = hypoxanthine + 5-phospho-alpha-D-ribose 1-diphosphate. The protein operates within purine metabolism; GMP biosynthesis via salvage pathway; GMP from guanine: step 1/1. It participates in purine metabolism; XMP biosynthesis via salvage pathway; XMP from xanthine: step 1/1. Purine salvage pathway enzyme that catalyzes the transfer of the ribosyl-5-phosphate group from 5-phospho-alpha-D-ribose 1-diphosphate (PRPP) to the N9 position of the 6-oxopurines guanine and xanthine to form the corresponding ribonucleotides GMP (guanosine 5'-monophosphate) and XMP (xanthosine 5'-monophosphate), with the release of PPi. To a lesser extent, also acts on hypoxanthine. This chain is Xanthine-guanine phosphoribosyltransferase, found in Yersinia enterocolitica serotype O:8 / biotype 1B (strain NCTC 13174 / 8081).